Consider the following 389-residue polypeptide: Lipid-A-disaccharide synthase (389 aa).

It belongs to the LpxB family.

The enzyme catalyses a lipid X + a UDP-2-N,3-O-bis[(3R)-3-hydroxyacyl]-alpha-D-glucosamine = a lipid A disaccharide + UDP + H(+). It participates in bacterial outer membrane biogenesis; LPS lipid A biosynthesis. In terms of biological role, condensation of UDP-2,3-diacylglucosamine and 2,3-diacylglucosamine-1-phosphate to form lipid A disaccharide, a precursor of lipid A, a phosphorylated glycolipid that anchors the lipopolysaccharide to the outer membrane of the cell. The protein is Lipid-A-disaccharide synthase of Burkholderia cenocepacia (strain ATCC BAA-245 / DSM 16553 / LMG 16656 / NCTC 13227 / J2315 / CF5610) (Burkholderia cepacia (strain J2315)).